The following is an 843-amino-acid chain: Potassium transporter 10 (843 aa).

The span at 1–15 shows a compositional bias: low complexity; the sequence is MKSPSPVDPESPSSP. Positions 1–25 are disordered; that stretch reads MKSPSPVDPESPSSPDCKGGSSSKR. Topologically, residues 1 to 34 are cytoplasmic; the sequence is MKSPSPVDPESPSSPDCKGGSSSKRRRLPWRMTM. A helical transmembrane segment spans residues 35–55; sequence SLAYQSLGVVYGDLSTSPLYV. The Vacuolar portion of the chain corresponds to 56–72; that stretch reads YKAAFAEDIQHSETNEE. The helical transmembrane segment at 73–93 threads the bilayer; the sequence is ILGVLSFVFWTLTLVPLLKYV. At 94–183 the chain is on the cytoplasmic side; it reads CVVLRADDNG…LLERHKVLQR (90 aa). A helical transmembrane segment spans residues 184-204; that stretch reads VLLVLALVGTCMVIGDGVLTP. The Vacuolar segment spans residues 205–225; sequence AISVFSAVSGLELSMEKHQHK. A helical membrane pass occupies residues 226–246; that stretch reads YVEVPIACFVLVCLFCLQHYG. Topologically, residues 247-249 are cytoplasmic; the sequence is THR. The chain crosses the membrane as a helical span at residues 250-270; sequence VGFLFAPIVITWLLCISMIGV. Over 271-298 the chain is Vacuolar; it reads YNIVHWEPNVYRALSPYYMYKFLKKTQR. A helical transmembrane segment spans residues 299-319; it reads GGWMSLGGILLCITGSEAMFA. At 320–326 the chain is on the cytoplasmic side; that stretch reads DLGHFNQ. A helical transmembrane segment spans residues 327–347; it reads LSIQIAFTCMVYPSLILAYMG. At 348–377 the chain is on the vacuolar side; the sequence is QAAYLCKHHIIESDYRIGFYVSVPEKIRWP. A helical transmembrane segment spans residues 378-398; the sequence is VLAIAILAAVVGSQAVITGTF. Topologically, residues 399–425 are cytoplasmic; the sequence is SMIKQCTALGCFPRVKIVHTSDKVHGQ. The helical transmembrane segment at 426–446 threads the bilayer; it reads IYIPEINWILMILCLAITIGF. Residues 447-451 are Vacuolar-facing; it reads RDTKH. Residues 452 to 472 form a helical membrane-spanning segment; sequence LGNASGLAVITVMLVTTCLMS. The Cytoplasmic segment spans residues 473–482; the sequence is LVIVLCWHKS. A helical transmembrane segment spans residues 483–505; sequence IFLAFGFIIFFGTIEALYFSASL. Residues 506–510 lie on the Vacuolar side of the membrane; the sequence is IKFRE. Residues 511-531 form a helical membrane-spanning segment; it reads GAWVPIVLAFIFMAIMCIWHY. Residues 532–843 are Cytoplasmic-facing; that stretch reads GTIKKYEFDL…TLEVGMIYYV (312 aa). A disordered region spans residues 667–747; sequence AASSKPKNVC…IMSPSPSPPP (81 aa). Gly residues predominate over residues 718–735; that stretch reads GGSGSGSGRGSSRGGGGA.

It belongs to the HAK/KUP transporter (TC 2.A.72.3) family. In terms of tissue distribution, expressed in roots, shoots, and panicle at flowering stage.

It is found in the vacuole membrane. High-affinity potassium transporter. This chain is Potassium transporter 10 (HAK10), found in Oryza sativa subsp. japonica (Rice).